The sequence spans 325 residues: Probable arylamine N-acetyltransferase 1 (325 aa).

Cys72 serves as the catalytic Acyl-thioester intermediate. Catalysis depends on residues His112 and Asp127.

Belongs to the arylamine N-acetyltransferase family.

The enzyme catalyses an arylamine + acetyl-CoA = an N-acetylarylamine + CoA. This is Probable arylamine N-acetyltransferase 1 from Dictyostelium discoideum (Social amoeba).